A 486-amino-acid polypeptide reads, in one-letter code: Nuclear distribution protein PAC1 (486 aa).

Residues 66–99 are a coiled coil; sequence STVLRLQKKIIDLENEISNLNNIINSTNSDNNGI. 8 WD repeats span residues 119-158, 164-205, 206-246, 249-291, 294-328, 329-368, 389-428, and 437-483; these read QCEN…NTIP, AHTR…RTLN, GHEH…SLKS, GHSE…GVAM, GHSH…FPTI, PLEL…IAPH, GHSS…ETGY, and GHDG…NSIK.

The protein belongs to the WD repeat LIS1/nudF family. In terms of assembly, self-associates. Interacts with NDL1 and dynein.

The protein resides in the cytoplasm. It localises to the cytoskeleton. The protein localises to the spindle pole. In terms of biological role, positively regulates the activity of the minus-end directed microtubule motor protein dynein. Plays a central role in positioning the mitotic spindle at the bud neck during cell division. Targets cytoplasmic dynein to microtubule plus ends, thereby promoting dynein-mediated microtubule sliding along the bud cortex and consequently the movement of the mitotic spindle to the bud neck. The polypeptide is Nuclear distribution protein PAC1 (Candida albicans (strain SC5314 / ATCC MYA-2876) (Yeast)).